The following is a 551-amino-acid chain: Frizzled-2 (551 aa).

The signal sequence occupies residues 1–26 (MQGVTRASILLIIYHLFTLSLGQLHG). Over 27–231 (EKGISVPEHG…FSQDEIRFAR (205 aa)) the chain is Extracellular. The FZ domain maps to 33-152 (PEHGFCQPIS…HGAEQICVGQ (120 aa)). Cystine bridges form between cysteine 38–cysteine 99, cysteine 46–cysteine 92, cysteine 83–cysteine 120, cysteine 109–cysteine 149, and cysteine 113–cysteine 137. Asparagine 52 carries an N-linked (GlcNAc...) asparagine glycan. Asparagine 153 is a glycosylation site (N-linked (GlcNAc...) asparagine). A helical transmembrane segment spans residues 232–252 (IWILIWSVLCCASTFITVTTY). Residues 253 to 265 (LVDMQRFRYPERP) lie on the Cytoplasmic side of the membrane. Residues 266 to 286 (IIFLSGCYTMVSVAYIAGFVL) traverse the membrane as a helical segment. Over 287–313 (GDKVVCNEGFSEDGYKTVVQGTKKEGC) the chain is Extracellular. The helical transmembrane segment at 314 to 334 (TILFMMLYFFSMASSIWWVIL) threads the bilayer. Over 335-356 (SLTWFLAAGMKWGHEAIEANSQ) the chain is Cytoplasmic. The chain crosses the membrane as a helical span at residues 357–377 (YFHLAAWAVPAVKTITILAMG). The Extracellular portion of the chain corresponds to 378–400 (QIDGDLLSGVCFVGLNNIDPLRG). A helical membrane pass occupies residues 401–421 (FVLAPLFVYLFIGTSFLLAGF). Topologically, residues 422–447 (VSLFRIRTIMKHDGTKTEKLERLMVR) are cytoplasmic. A helical transmembrane segment spans residues 448 to 468 (IGVFSVLYTVPATIVIACYFY). Residues 469-505 (EQAFREHWERSWVSQNCKSLAIPCPLQYTPRMTPDFT) are Extracellular-facing. Residues 506-526 (VYMIKYLMTLIVGITSGFWIW) form a helical membrane-spanning segment. Residues 527–534 (SGKTLHSW) are Cytoplasmic-facing. Residues 529 to 534 (KTLHSW) carry the Lys-Thr-X-X-X-Trp motif, mediates interaction with the PDZ domain of Dvl family members motif. The PDZ-binding motif lies at 549–551 (TTV).

Belongs to the G-protein coupled receptor Fz/Smo family. In terms of tissue distribution, widely expressed, especially in the eye anlage, otic vesicle and developing somites.

The protein resides in the membrane. The protein localises to the cell membrane. Functionally, receptor for Wnt proteins. Most of frizzled receptors are coupled to the beta-catenin canonical signaling pathway, which leads to the activation of disheveled proteins, inhibition of GSK-3 kinase, nuclear accumulation of beta-catenin and activation of Wnt target genes. A second signaling pathway involving PKC and calcium fluxes has been seen for some family members, but it is not yet clear if it represents a distinct pathway or if it can be integrated in the canonical pathway, as PKC seems to be required for Wnt-mediated inactivation of GSK-3 kinase. Both pathways seem to involve interactions with G-proteins. May be involved in transduction and intercellular transmission of polarity information during tissue morphogenesis and/or in differentiated tissues. This is Frizzled-2 (fzd2) from Xenopus laevis (African clawed frog).